The primary structure comprises 834 residues: Semaphorin-4C (834 aa).

The N-terminal stretch at 1-20 (MAPHWAVWLLAAGLWGLGIG) is a signal peptide. Residues 21-664 (AEMWWNLVPR…EARAPLENLG (644 aa)) lie on the Extracellular side of the membrane. A Sema domain is found at 30–497 (RKTVSSGELV…SRSQLVQLSL (468 aa)). Positions 46 to 489 (SQTGIQDFLT…SKKVLFAGSR (444 aa)) are dominant negative effect on myogenic differentiation. C99 and C110 form a disulfide bridge. N-linked (GlcNAc...) asparagine glycosylation is found at N106 and N121. 3 cysteine pairs are disulfide-bonded: C128/C137, C261/C370, and C285/C330. N-linked (GlcNAc...) asparagine glycosylation is found at N310 and N419. The region spanning 499-552 (DCTKYRFCVDCVLARDPYCAWNVNTSRCVATTSGRSGSFLVQHVANLDTSKMCN) is the PSI domain. Intrachain disulfides connect C500–C517 and C509–C526. N-linked (GlcNAc...) asparagine glycosylation is found at N522 and N565. Positions 557–645 (KKVRSIPKNI…RLAAESYLVA (89 aa)) constitute an Ig-like C2-type domain. Cysteines 578 and 628 form a disulfide. A helical membrane pass occupies residues 665–685 (LVWLAVVALGAVCLVLLLLVL). Topologically, residues 686–834 (SLRRRLREEL…PDSNPEESSV (149 aa)) are cytoplasmic. A Phosphoserine modification is found at S743. Residues 749-834 (GHARCQPGGG…PDSNPEESSV (86 aa)) are disordered. Pro residues predominate over residues 757–773 (GGPPSPPPGIPGQPLPS). Residues 831–834 (ESSV) carry the PDZ-binding motif.

The protein belongs to the semaphorin family. In terms of assembly, interacts (via the PDZ-binding motif) with GIPC (via the PDZ domain). Interacts with NCDN. Interacts (via the PDZ-binding motif) with DLG4. Interacts with PLXNB2. As to expression, predominantly expressed in brain (at protein level).

It localises to the postsynaptic density membrane. The protein resides in the cytoplasmic vesicle. The protein localises to the secretory vesicle. It is found in the synaptic vesicle membrane. Its function is as follows. Cell surface receptor for PLXNB2 that plays an important role in cell-cell signaling. PLXNB2 binding promotes downstream activation of RHOA and phosphorylation of ERBB2 at 'Tyr-1248'. Required for normal brain development, axon guidance and cell migration. Probable signaling receptor which may play a role in myogenic differentiation through activation of the stress-activated MAPK cascade. The chain is Semaphorin-4C (Sema4c) from Mus musculus (Mouse).